The chain runs to 299 residues: Formin-like protein 12 (299 aa).

One can recognise an FH2 domain in the interval 1 to 295 (MASNCEKMLS…LEKRKMNIKQ (295 aa)).

The protein belongs to the formin-like family. Class-II subfamily.

The polypeptide is Formin-like protein 12 (FH12) (Arabidopsis thaliana (Mouse-ear cress)).